A 141-amino-acid chain; its full sequence is Nucleoside triphosphatase NudI (141 aa).

Residues 1 to 141 (MRQRTIVCPL…RKTLRLKGLL (141 aa)) enclose the Nudix hydrolase domain. The short motif at 38–59 (GGVEPGERIEEALRREIREELG) is the Nudix box element.

This sequence belongs to the Nudix hydrolase family. NudI subfamily. As to quaternary structure, monomer. Requires Mg(2+) as cofactor.

It carries out the reaction a ribonucleoside 5'-triphosphate + H2O = a ribonucleoside 5'-phosphate + diphosphate + H(+). The enzyme catalyses a 2'-deoxyribonucleoside 5'-triphosphate + H2O = a 2'-deoxyribonucleoside 5'-phosphate + diphosphate + H(+). It catalyses the reaction dUTP + H2O = dUMP + diphosphate + H(+). The catalysed reaction is dTTP + H2O = dTMP + diphosphate + H(+). It carries out the reaction dCTP + H2O = dCMP + diphosphate + H(+). In terms of biological role, catalyzes the hydrolysis of nucleoside triphosphates, with a preference for pyrimidine deoxynucleoside triphosphates (dUTP, dTTP and dCTP). This is Nucleoside triphosphatase NudI from Escherichia coli O9:H4 (strain HS).